A 619-amino-acid polypeptide reads, in one-letter code: UvrABC system protein C (619 aa).

Residues 20-98 form the GIY-YIG domain; that stretch reads TAPGVYRMYA…IKSLSPRYNV (79 aa). Residues 207-242 enclose the UVR domain; sequence DQLGEEIMHSMQQASEALEFERAARLRDLLSSLRSM.

It belongs to the UvrC family. As to quaternary structure, interacts with UvrB in an incision complex.

Its subcellular location is the cytoplasm. The UvrABC repair system catalyzes the recognition and processing of DNA lesions. UvrC both incises the 5' and 3' sides of the lesion. The N-terminal half is responsible for the 3' incision and the C-terminal half is responsible for the 5' incision. In Xanthomonas euvesicatoria pv. vesicatoria (strain 85-10) (Xanthomonas campestris pv. vesicatoria), this protein is UvrABC system protein C.